The primary structure comprises 300 residues: Probable lipid kinase YegS-like (300 aa).

Residues 1–129 (MSKKALLILH…CDVIRVNNHY (129 aa)) enclose the DAGKc domain. ATP contacts are provided by residues T38, 64-70 (GDGSVRD), and T92. Positions 210, 213, and 215 each coordinate Mg(2+). The Proton acceptor role is filled by E272.

Belongs to the diacylglycerol/lipid kinase family. YegS lipid kinase subfamily. Mg(2+) is required as a cofactor. The cofactor is Ca(2+).

It localises to the cytoplasm. In terms of biological role, probably phosphorylates lipids; the in vivo substrate is unknown. This chain is Probable lipid kinase YegS-like, found in Alcanivorax borkumensis (strain ATCC 700651 / DSM 11573 / NCIMB 13689 / SK2).